The chain runs to 229 residues: MQETQIPITQIDETPKAVEPSVWKNLFTQGVWTNNSTLVQLLGLCPLLAVSNNVTNALGLGLATLLVLTITNTIISLFRKVIPHDIRIPIYVMIIATAVTTIQLLMNAFAFPVYQSLGIFVPLIVTNCIVIGRAEAFASKNSVAHSAFDGFAMGLGMTLSLVVLGAIREIIGNGTLFDGLDLLLGSWAKALRMDLLHLDSGLLLAILPPGAFIGLGLILAVKNIIDRKK.

5 helical membrane-spanning segments follow: residues 58-78 (LGLGLATLLVLTITNTIISLF), 82-102 (IPHDIRIPIYVMIIATAVTTI), 105-125 (LMNAFAFPVYQSLGIFVPLIV), 147-167 (AFDGFAMGLGMTLSLVVLGAI), and 201-221 (GLLLAILPPGAFIGLGLILAV).

This sequence belongs to the NqrDE/RnfAE family. As to quaternary structure, the complex is composed of six subunits: RnfA, RnfB, RnfC, RnfD, RnfE and RnfG.

Its subcellular location is the cell inner membrane. In terms of biological role, part of a membrane-bound complex that couples electron transfer with translocation of ions across the membrane. In Glaesserella parasuis serovar 5 (strain SH0165) (Haemophilus parasuis), this protein is Ion-translocating oxidoreductase complex subunit E.